Here is a 1434-residue protein sequence, read N- to C-terminus: Probable ATP-dependent RNA helicase spindle-E (1434 aa).

Residues 66–86 are disordered; it reads VGGPSNTKRTKTLDELESDDD. One can recognise a Helicase ATP-binding domain in the interval 127–294; that stretch reads MKAIKENPVV…FASCKSMPPV (168 aa). 140–147 lines the ATP pocket; the sequence is GETGCGKT. The DEAH box signature appears at 240-243; the sequence is DEVH. The Helicase C-terminal domain occupies 354–526; sequence QSEQSYEEAK…SSVLKAKELD (173 aa). The Tudor domain maps to 938–1001; the sequence is ASAITKGLQL…RLMRHELRRD (64 aa).

It belongs to the DEAD box helicase family. DEAH subfamily.

The protein resides in the cytoplasm. The enzyme catalyses ATP + H2O = ADP + phosphate + H(+). In terms of biological role, probable ATP-binding RNA helicase which plays a central role during spermatogenesis and oogenesis by repressing transposable elements and preventing their mobilization, which is essential for the germline integrity. Acts via the piRNA metabolic process, which mediates the repression of transposable elements during meiosis by forming complexes composed of piRNAs and Piwi and govern the methylation and subsequent repression of transposons. Involved in the repression of LTR retrotransposon copia. Also involved in telomere regulation by repressing specialized telomeric retroelements HeT-A, TAHRE, and TART; Drosophila telomeres being maintained by transposition of specialized telomeric retroelements. Involved in telomeric trans-silencing, a repression mechanism by which a transposon or a transgene inserted in subtelomeric heterochromatin has the capacity to repress in trans in the female germline, a homologous transposon, or transgene located in euchromatin. Involved in the repression of testis-expressed Stellate genes by the homologous Su(Ste) repeats. Required for anteroposterior and dorsoventral axis formation during oogenesis. In Drosophila grimshawi (Hawaiian fruit fly), this protein is Probable ATP-dependent RNA helicase spindle-E (spn-E).